Here is a 413-residue protein sequence, read N- to C-terminus: Terephthalate 1,2-dioxygenase, terminal oxygenase component subunit alpha 2 (413 aa).

Residues 41–144 (NYLCLESEIP…CKEEHGPRKL (104 aa)) form the Rieske domain. The [2Fe-2S] cluster site is built by Cys82, His84, Cys102, and His105.

This sequence belongs to the bacterial ring-hydroxylating dioxygenase alpha subunit family. As to quaternary structure, heterotetramer composed of 2 alpha (TphA2I and TphA2II) and 2 beta (TphA3I and TphA3II) subunits. Part of a multicomponent enzyme system composed of a reductase (TphA1I or TphA1II) and a two-subunit oxygenase component (TphA2I or TphA2II and TphA3I or TphA3II). It depends on Fe cation as a cofactor. The cofactor is [2Fe-2S] cluster.

The catalysed reaction is terephthalate + NADH + O2 + H(+) = (3S,4R)-3,4-dihydroxycyclohexa-1,5-diene-1,4-dicarboxylate + NAD(+). Its activity is regulated as follows. Inhibited by EDTA. Component of the terephthalate 1,2-dioxygenase multicomponent enzyme system which catalyzes the dioxygenation of terephthalate (TER/TPA) to 1,2-dihydroxy-3,5-cyclohexadiene-1,4-dicarboxylic acid (DCD). It can also use 2,5-dicarboxypyridine (PDC) and 1,4-napthalenedicarboxylic acid (NDC) as substrates, and preferentially uses NADPH which is the physiological electron donor. In Comamonas sp, this protein is Terephthalate 1,2-dioxygenase, terminal oxygenase component subunit alpha 2 (tphA2II).